The sequence spans 167 residues: Homeobox protein EgHBX3 (167 aa).

Residues 80–139 (SQSKRRVLFNKFQISQLEKRLKQRYLTAQERQELAHTIGLTPTQVKIWFQNHAYKMKRLF) constitute a DNA-binding region (homeobox).

Belongs to the NK-2 homeobox family.

It localises to the nucleus. This chain is Homeobox protein EgHBX3 (HBX3), found in Echinococcus granulosus (Hydatid tapeworm).